We begin with the raw amino-acid sequence, 226 residues long: Endonuclease NucS (226 aa).

It belongs to the NucS endonuclease family.

The protein resides in the cytoplasm. Functionally, cleaves both 3' and 5' ssDNA extremities of branched DNA structures. This chain is Endonuclease NucS, found in Mycobacterium ulcerans (strain Agy99).